The following is a 133-amino-acid chain: ATP synthase epsilon chain, chloroplastic (133 aa).

The protein belongs to the ATPase epsilon chain family. As to quaternary structure, F-type ATPases have 2 components, CF(1) - the catalytic core - and CF(0) - the membrane proton channel. CF(1) has five subunits: alpha(3), beta(3), gamma(1), delta(1), epsilon(1). CF(0) has three main subunits: a, b and c.

The protein localises to the plastid. It is found in the chloroplast thylakoid membrane. Functionally, produces ATP from ADP in the presence of a proton gradient across the membrane. The polypeptide is ATP synthase epsilon chain, chloroplastic (Atropa belladonna (Belladonna)).